The sequence spans 574 residues: Lysyl oxidase homolog 1 (574 aa).

A signal peptide spans 1 to 25 (MALARGSRQLGALVWGACLCVLVHG). A propeptide spanning residues 26–95 (QQAQPGQGSD…RRSHGSPRRR (70 aa)) is cleaved from the precursor. 2 disordered regions span residues 62–123 (VPAG…GFGQ) and 239–374 (GGEE…DLVP). Residues 86-96 (RRSHGSPRRRQ) are compositionally biased toward basic residues. Composition is skewed to pro residues over residues 255-268 (PERP…PPPD) and 313-332 (YANP…PPYL). The interval 311–369 (PPYANPPPEAYGPPRALEPPYLPVRSSDTPPPGGERNGAQQGRLSVGSVYRPNQNGRGL) is interaction with FBLN5. The tract at residues 370-574 (PDLVPDPNYV…SATNCKIVQS (205 aa)) is lysyl-oxidase like. Intrachain disulfides connect Cys-395–Cys-401, Cys-448–Cys-497, Cys-481–Cys-487, Cys-508–Cys-518, and Cys-555–Cys-569. Residues His-449, His-451, and His-453 each contribute to the Cu cation site. Positions 477 to 512 (KASFCLEDSTCDFGNLKRYACTSHTQGLSPGCYDTY) form a cross-link, lysine tyrosylquinone (Lys-Tyr); alternate. Position 512 is a 2',4',5'-topaquinone; alternate (Tyr-512).

Belongs to the lysyl oxidase family. Interacts (via propeptide) with EFEMP2. Interacts with FBLN5. Cu cation serves as cofactor. The cofactor is lysine tyrosylquinone residue. In terms of processing, the lysine tyrosylquinone cross-link (LTQ) is generated by condensation of the epsilon-amino group of a lysine with a topaquinone produced by oxidation of tyrosine. Proteolytic processing by a furin-like protease causes removal of N-terminal propeptide resulting in an enzyme largely inactive, but further proteolytic processing by BMP1 results in enzyme activation. Expressed in ocular tissues including the iris, ciliary body, lens and optic nerve. Not detected in the retina.

Its subcellular location is the secreted. It localises to the extracellular space. The protein resides in the extracellular matrix. The enzyme catalyses L-lysyl-[protein] + O2 + H2O = (S)-2-amino-6-oxohexanoyl-[protein] + H2O2 + NH4(+). Functionally, catalyzes the oxidative deamination of lysine and hydroxylysine residues in collagen and elastin, resulting in the formation of covalent cross-linkages, and the stabilization of collagen and elastin fibers. Essential for the elastic fiber homeostasis and for their maintenance at adult age. This chain is Lysyl oxidase homolog 1 (LOXL1), found in Homo sapiens (Human).